A 559-amino-acid polypeptide reads, in one-letter code: Protein pp71 (559 aa).

An S-nitrosocysteine; by host modification is found at Cys-218. Thr-223 carries the post-translational modification Phosphothreonine. Disordered regions lie at residues 404 to 440 (EFLPQSPGLPPTEEEEEEEEEDDEDDLSSTPTPTPLS) and 530 to 559 (SSTLRSVPAPRPSPISTASTSSTPRSRPRI). The segment covering 415-430 (TEEEEEEEEEDDEDDL) has biased composition (acidic residues). Low complexity-rich tracts occupy residues 431 to 440 (SSTPTPTPLS) and 543 to 559 (PISTASTSSTPRSRPRI).

The protein belongs to the herpesviridae pp71 family. In terms of assembly, interacts with the host protein DAXX; this interaction takes place at ND10 and induces the reversal of DAXX-mediated repression of viral transcription. Interacts with UL35. Interacts with host TMEM173/STING1; this interaction inhibits the cGAS/STING pathway. Interacts with host RB1; this interaction mediates RB1 proteasomal degradation. In terms of processing, S-nitrosylation limits ability to undermine the cGAS/STING antiviral pathway.

It is found in the virion tegument. Its subcellular location is the host nucleus. The protein localises to the host endoplasmic reticulum. Its function is as follows. Stimulates viral immediate-early (IE) transcription. Plays a role in the inhibition of the host innate repsonse by targeting STING1 and thus the cGAS-STING pathway. Also counteracts host DAXX-mediated repression of viral transcription. Displaces a DAXX-binding protein, ATRX, from nuclear domain 10 sites (ND10) shortly after infection. Increases the basal level of SUMOylated DAXX in infected cells. Stimulates quiescent cells to re-enter the cell cycle, proceed through G1 and enter the S phase. Interacts with hypophosphorylated forms of RB1 and induces their degradation by the proteasome without involving ubiquitin conjugation. The chain is Protein pp71 (UL82) from Human cytomegalovirus (strain AD169) (HHV-5).